The chain runs to 327 residues: Ribosomal RNA large subunit methyltransferase F (327 aa).

Residues 1–31 (MTHPVTPKNTTRPTPANKPAASTLHPRNPHQ) are disordered.

Belongs to the methyltransferase superfamily. METTL16/RlmF family.

The protein resides in the cytoplasm. The catalysed reaction is adenosine(1618) in 23S rRNA + S-adenosyl-L-methionine = N(6)-methyladenosine(1618) in 23S rRNA + S-adenosyl-L-homocysteine + H(+). Specifically methylates the adenine in position 1618 of 23S rRNA. This chain is Ribosomal RNA large subunit methyltransferase F, found in Psychrobacter sp. (strain PRwf-1).